Consider the following 299-residue polypeptide: MKLSKLSILTSALATSALAAPAVVTVTEHAHEAAVVTVQGVVYVENGQTRTTYETLAPASTATPTSTATALVAPPVAPSSASSNSDVVLSALKNLASVWGKTTDSTTTLTSSESTSQSLAQATTTSTPAAASTTSTPAATTTTSQAAATSSASSSDSDLSDFASSVLAEHNKKRALHKDTPALSWSDTLASYAQDYADNYDCSGTLTHSGGPYGENLALGYDGPAAVDAWYNEISNYDFSNPGFSSNTGHFTQVVWKSTTQVGCGIKTCGGAWGDYVICSYDPAGNYEGEYADNVEPLA.

The first 19 residues, 1 to 19, serve as a signal peptide directing secretion; the sequence is MKLSKLSILTSALATSALA. The disordered stretch occupies residues 103–157; the sequence is TDSTTTLTSSESTSQSLAQATTTSTPAAASTTSTPAATTTTSQAAATSSASSSDS. Positions 167 to 281 constitute an SCP domain; it reads LAEHNKKRAL…AWGDYVICSY (115 aa).

The protein belongs to the CRISP family. Post-translationally, O-glycosylated.

The protein resides in the secreted. Its function is as follows. Secreted protein required for efficient export of lipids such as acetylated sterols. Acts in detoxification of hydrophobic compounds. The sequence is that of Protein PRY1 from Saccharomyces cerevisiae (strain ATCC 204508 / S288c) (Baker's yeast).